Consider the following 489-residue polypeptide: NADH-quinone oxidoreductase subunit N (489 aa).

14 helical membrane passes run 6–26 (VLFI…AVML), 37–57 (VFYI…PASS), 66–86 (LLIV…GSLA), 105–125 (FYLL…AHHL), 127–147 (AIFI…GYAF), 159–179 (YMVL…LIYA), 204–224 (ITLL…KLSL), 239–259 (PAPV…AVLL), 271–291 (FFYS…NLLA), 299–319 (RLLG…LIAC), 329–349 (VALY…VVSL), 377–397 (SAMT…GFIG), 408–430 (FHLW…YYLR), and 452–472 (ALTT…LLGI).

This sequence belongs to the complex I subunit 2 family. NDH-1 is composed of 14 different subunits. Subunits NuoA, H, J, K, L, M, N constitute the membrane sector of the complex.

The protein localises to the cell inner membrane. The enzyme catalyses a quinone + NADH + 5 H(+)(in) = a quinol + NAD(+) + 4 H(+)(out). NDH-1 shuttles electrons from NADH, via FMN and iron-sulfur (Fe-S) centers, to quinones in the respiratory chain. The immediate electron acceptor for the enzyme in this species is believed to be ubiquinone. Couples the redox reaction to proton translocation (for every two electrons transferred, four hydrogen ions are translocated across the cytoplasmic membrane), and thus conserves the redox energy in a proton gradient. This chain is NADH-quinone oxidoreductase subunit N, found in Tolumonas auensis (strain DSM 9187 / NBRC 110442 / TA 4).